The chain runs to 107 residues: Replication initiation control protein YabA (107 aa).

4 residues coordinate Zn(2+): histidine 81, cysteine 83, cysteine 97, and cysteine 100.

Belongs to the YabA family. In terms of assembly, homotetramer. Interacts with both DnaA and DnaN, acting as a bridge between these two proteins. Zn(2+) serves as cofactor.

The protein resides in the cytoplasm. Its subcellular location is the nucleoid. Involved in control of chromosome replication initiation. Inhibits the cooperative binding of DnaA to the oriC region, thus negatively regulating initiation of chromosome replication. Inhibits the ability of DnaA-ATP to form a helix on DNA; does not disassemble preformed DnaA-DNA helices. Decreases the residence time of DnaA on the chromosome at its binding sites (oriC, replication forks and promoter-binding sites). Tethers DnaA to the replication machinery via the DNA polymerase beta sliding clamp subunit (dnaN). Associates with oriC and other DnaA targets on the chromosome in a DnaA-dependent manner. The sequence is that of Replication initiation control protein YabA from Streptococcus equi subsp. equi (strain 4047).